The primary structure comprises 246 residues: Mast cell protease 9 (246 aa).

The signal sequence occupies residues 1-18 (MQALLFLMALLLPSRAGA). The propeptide at 19 to 20 (EE) is activation peptide. The 224-residue stretch at 21–244 (IIGGVESEPH…HVPWINRVIK (224 aa)) folds into the Peptidase S1 domain. The cysteines at positions 50 and 66 are disulfide-linked. Residues histidine 65 and aspartate 109 each act as charge relay system in the active site. 2 cysteine pairs are disulfide-bonded: cysteine 143–cysteine 208 and cysteine 174–cysteine 187. Residue serine 202 is the Charge relay system of the active site.

Belongs to the peptidase S1 family. Granzyme subfamily. Selectively expressed in uterine mast cells.

This Mus musculus (Mouse) protein is Mast cell protease 9 (Mcpt9).